Reading from the N-terminus, the 163-residue chain is Xanthine-guanine phosphoribosyltransferase (163 aa).

Residues 43 to 44 and 95 to 103 each bind 5-phospho-alpha-D-ribose 1-diphosphate; these read RG and DDLVDTGGT. Asp96 contacts Mg(2+). Residues Asp99 and Ile142 each coordinate guanine. Xanthine-binding residues include Asp99 and Ile142. Residues 99-103 and 141-142 contribute to the GMP site; these read DTGGT and WI.

Belongs to the purine/pyrimidine phosphoribosyltransferase family. XGPT subfamily. As to quaternary structure, homotetramer. Mg(2+) is required as a cofactor.

The protein resides in the cell inner membrane. It carries out the reaction GMP + diphosphate = guanine + 5-phospho-alpha-D-ribose 1-diphosphate. The enzyme catalyses XMP + diphosphate = xanthine + 5-phospho-alpha-D-ribose 1-diphosphate. The catalysed reaction is IMP + diphosphate = hypoxanthine + 5-phospho-alpha-D-ribose 1-diphosphate. The protein operates within purine metabolism; GMP biosynthesis via salvage pathway; GMP from guanine: step 1/1. Its pathway is purine metabolism; XMP biosynthesis via salvage pathway; XMP from xanthine: step 1/1. Its function is as follows. Purine salvage pathway enzyme that catalyzes the transfer of the ribosyl-5-phosphate group from 5-phospho-alpha-D-ribose 1-diphosphate (PRPP) to the N9 position of the 6-oxopurines guanine and xanthine to form the corresponding ribonucleotides GMP (guanosine 5'-monophosphate) and XMP (xanthosine 5'-monophosphate), with the release of PPi. To a lesser extent, also acts on hypoxanthine. The sequence is that of Xanthine-guanine phosphoribosyltransferase from Nitratidesulfovibrio vulgaris (strain DP4) (Desulfovibrio vulgaris).